The sequence spans 307 residues: Solute carrier family 25 member 53 (307 aa).

The segment at 1 to 23 (MGEQNHSPGKELQHRTRAEAPGK) is disordered. Positions 8-22 (PGKELQHRTRAEAPG) are enriched in basic and acidic residues. 3 Solcar repeats span residues 25–105 (SWHS…LLCF), 112–202 (HTLG…IQDG), and 210–302 (HWVP…HSRK). 6 helical membrane passes run 31 to 51 (YALG…IYKV), 82 to 102 (YPPL…YDSL), 112 to 132 (HTLG…AVAL), 181 to 201 (VLAR…PIQD), 215 to 235 (LVSG…LIVL), and 269 to 290 (IYRG…TTAI).

Belongs to the mitochondrial carrier (TC 2.A.29) family.

The protein localises to the mitochondrion inner membrane. In Homo sapiens (Human), this protein is Solute carrier family 25 member 53 (SLC25A53).